Reading from the N-terminus, the 563-residue chain is Heat shock 70 kDa protein 8 (563 aa).

A disordered region spans residues 1–25 (MAEAAYTVASDSENTGEEKSSSSPS). Ala-2 is subject to N-acetylalanine.

Belongs to the heat shock protein 70 (TC 1.A.33) family. DnaK subfamily.

In terms of biological role, in cooperation with other chaperones, Hsp70s are key components that facilitate folding of de novo synthesized proteins, assist translocation of precursor proteins into organelles, and are responsible for degradation of damaged protein under stress conditions. This Arabidopsis thaliana (Mouse-ear cress) protein is Heat shock 70 kDa protein 8 (HSP70-8).